A 143-amino-acid chain; its full sequence is Large ribosomal subunit protein uL15 (143 aa).

Basic residues-rich tracts occupy residues 1-13 (MIRKSKKITKMRG) and 23-38 (KKHRGAGHRGGRGNAG). Positions 1–38 (MIRKSKKITKMRGSRTCGYGEAKKHRGAGHRGGRGNAG) are disordered.

Belongs to the universal ribosomal protein uL15 family. As to quaternary structure, part of the 50S ribosomal subunit.

Binds to the 23S rRNA. The polypeptide is Large ribosomal subunit protein uL15 (Methanococcus maripaludis (strain C7 / ATCC BAA-1331)).